The chain runs to 213 residues: Orotate phosphoribosyltransferase (213 aa).

K26 lines the 5-phospho-alpha-D-ribose 1-diphosphate pocket. Residue 34-35 coordinates orotate; the sequence is FF. Residues 72 to 73, R99, K100, K103, H105, and 124 to 132 contribute to the 5-phospho-alpha-D-ribose 1-diphosphate site; these read YK and DDVITAGTA. Orotate contacts are provided by T128 and R156.

This sequence belongs to the purine/pyrimidine phosphoribosyltransferase family. PyrE subfamily. As to quaternary structure, homodimer. Mg(2+) serves as cofactor.

It carries out the reaction orotidine 5'-phosphate + diphosphate = orotate + 5-phospho-alpha-D-ribose 1-diphosphate. Its pathway is pyrimidine metabolism; UMP biosynthesis via de novo pathway; UMP from orotate: step 1/2. Functionally, catalyzes the transfer of a ribosyl phosphate group from 5-phosphoribose 1-diphosphate to orotate, leading to the formation of orotidine monophosphate (OMP). The sequence is that of Orotate phosphoribosyltransferase from Erwinia tasmaniensis (strain DSM 17950 / CFBP 7177 / CIP 109463 / NCPPB 4357 / Et1/99).